The chain runs to 292 residues: Selenate reductase subunit B (292 aa).

Residues 1 to 43 constitute a signal peptide (tat-type signal); that stretch reads MGSKETKNTSRRDFLIKGAGAAALGAGAFAISQVPLLEKLASA. 4Fe-4S ferredoxin-type domains lie at 84 to 113, 129 to 160, and 161 to 190; these read WIMV…PPGV, VTKK…KSED, and GIVA…FDWG. Residues cysteine 93, cysteine 96, cysteine 99, cysteine 103, cysteine 138, cysteine 141, cysteine 146, cysteine 150, cysteine 170, cysteine 173, cysteine 176, cysteine 180, cysteine 230, cysteine 233, cysteine 245, and cysteine 249 each contribute to the [4Fe-4S] cluster site.

The complex is composed of three subunits: SrdA, SrdB and SrdC. [4Fe-4S] cluster serves as cofactor. Predicted to be exported by the Tat system. The position of the signal peptide cleavage has not been experimentally proven.

Its subcellular location is the secreted. The catalysed reaction is selenite + a quinone + H2O = selenate + a quinol. Functionally, component of the respiratory selenate reductase complex, which catalyzes the reduction of selenate to selenite. This subunit probably transfers electrons from SrdC to SrdA. The protein is Selenate reductase subunit B of Mesobacillus selenatarsenatis (strain DSM 18680 / JCM 14380 / FERM P-15431 / SF-1).